We begin with the raw amino-acid sequence, 174 residues long: Large ribosomal subunit protein uL10 (174 aa).

It belongs to the universal ribosomal protein uL10 family. In terms of assembly, part of the ribosomal stalk of the 50S ribosomal subunit. The N-terminus interacts with L11 and the large rRNA to form the base of the stalk. The C-terminus forms an elongated spine to which L12 dimers bind in a sequential fashion forming a multimeric L10(L12)X complex.

Functionally, forms part of the ribosomal stalk, playing a central role in the interaction of the ribosome with GTP-bound translation factors. The protein is Large ribosomal subunit protein uL10 of Nitrosospira multiformis (strain ATCC 25196 / NCIMB 11849 / C 71).